The chain runs to 1502 residues: E3 ubiquitin-protein ligase UPL4 (1502 aa).

Basic and acidic residues predominate over residues 1-21 (MENRGQKRMEVVEELPADKRA). The interval 1–107 (MENRGQKRME…DYQRQRSSGD (107 aa)) is disordered. Over residues 22–46 (CNSQDFRPSTSGSSVQAQANDTNPG) the composition is skewed to polar residues. Positions 67–90 (DEEEQEEQDKEDSDYGSCDSDEED) are enriched in acidic residues. Residues 91 to 107 (PRQRVLQDYQRQRSSGD) are compositionally biased toward basic and acidic residues. 4 ARM repeats span residues 143-183 (EESL…YLCD), 186-226 (PPSV…KISR), 228-265 (EPVA…NICK), and 267-306 (LSSE…KIAD). A disordered region spans residues 833-881 (CQAESSSPMEIDSESSDASQLQGSQVEDQTQLPGQQNASSSETSSEKED). Positions 849–875 (DASQLQGSQVEDQTQLPGQQNASSSET) are enriched in polar residues. The segment at 1022-1096 (RPVPHSEFVS…IRHHPQHLSS (75 aa)) is K-box. In terms of domain architecture, HECT spans 1128 to 1502 (KMMELYGNQK…TEGQGSFHLS (375 aa)). Cysteine 1469 functions as the Glycyl thioester intermediate in the catalytic mechanism.

Belongs to the UPL family. K-HECT subfamily.

It catalyses the reaction S-ubiquitinyl-[E2 ubiquitin-conjugating enzyme]-L-cysteine + [acceptor protein]-L-lysine = [E2 ubiquitin-conjugating enzyme]-L-cysteine + N(6)-ubiquitinyl-[acceptor protein]-L-lysine.. Its pathway is protein modification; protein ubiquitination. Its function is as follows. Probable E3 ubiquitin-protein ligase which mediates ubiquitination and subsequent proteasomal degradation of target proteins. This chain is E3 ubiquitin-protein ligase UPL4 (UPL4), found in Arabidopsis thaliana (Mouse-ear cress).